A 93-amino-acid chain; its full sequence is Small ribosomal subunit protein uS19 (93 aa).

Belongs to the universal ribosomal protein uS19 family.

Functionally, protein S19 forms a complex with S13 that binds strongly to the 16S ribosomal RNA. This Symbiobacterium thermophilum (strain DSM 24528 / JCM 14929 / IAM 14863 / T) protein is Small ribosomal subunit protein uS19.